A 382-amino-acid chain; its full sequence is Mannitol-1-phosphate 5-dehydrogenase (382 aa).

Residue Ala-4–Gly-15 participates in NAD(+) binding.

This sequence belongs to the mannitol dehydrogenase family.

The catalysed reaction is D-mannitol 1-phosphate + NAD(+) = beta-D-fructose 6-phosphate + NADH + H(+). The sequence is that of Mannitol-1-phosphate 5-dehydrogenase from Vibrio vulnificus (strain CMCP6).